Here is a 1009-residue protein sequence, read N- to C-terminus: Mediator of RNA polymerase II transcription subunit 5 (1009 aa).

This sequence belongs to the Mediator complex subunit 5 family. In terms of assembly, component of the Mediator complex.

Its subcellular location is the nucleus. Its function is as follows. Component of the Mediator complex, a coactivator involved in the regulated transcription of nearly all RNA polymerase II-dependent genes. Mediator functions as a bridge to convey information from gene-specific regulatory proteins to the basal RNA polymerase II transcription machinery. Mediator is recruited to promoters by direct interactions with regulatory proteins and serves as a scaffold for the assembly of a functional preinitiation complex with RNA polymerase II and the general transcription factors. In Neosartorya fischeri (strain ATCC 1020 / DSM 3700 / CBS 544.65 / FGSC A1164 / JCM 1740 / NRRL 181 / WB 181) (Aspergillus fischerianus), this protein is Mediator of RNA polymerase II transcription subunit 5 (nut1).